The following is a 119-amino-acid chain: Large ribosomal subunit protein uL18 (119 aa).

This sequence belongs to the universal ribosomal protein uL18 family. In terms of assembly, part of the 50S ribosomal subunit; part of the 5S rRNA/L5/L18/L25 subcomplex. Contacts the 5S and 23S rRNAs.

This is one of the proteins that bind and probably mediate the attachment of the 5S RNA into the large ribosomal subunit, where it forms part of the central protuberance. The chain is Large ribosomal subunit protein uL18 from Chlorobium luteolum (strain DSM 273 / BCRC 81028 / 2530) (Pelodictyon luteolum).